We begin with the raw amino-acid sequence, 220 residues long: Probable septum site-determining protein MinC (220 aa).

Belongs to the MinC family. In terms of assembly, interacts with MinD and FtsZ.

Functionally, cell division inhibitor that blocks the formation of polar Z ring septums. Rapidly oscillates between the poles of the cell to destabilize FtsZ filaments that have formed before they mature into polar Z rings. Prevents FtsZ polymerization. The sequence is that of Probable septum site-determining protein MinC from Vibrio campbellii (strain ATCC BAA-1116).